The chain runs to 394 residues: Elongation factor Tu 2 (394 aa).

Residues 9 to 204 form the tr-type G domain; the sequence is KPHCNIGTIG…SIDDYIPQPT (196 aa). A G1 region spans residues 18–25; sequence GHVDHGKT. 18–25 contributes to the GTP binding site; it reads GHVDHGKT. Thr-25 is a Mg(2+) binding site. The interval 61 to 65 is G2; it reads GITIQ. The interval 82–85 is G3; it reads DCPG. GTP contacts are provided by residues 82-86 and 137-140; these read DCPGH and NKID. The interval 137 to 140 is G4; the sequence is NKID. Residues 174-176 form a G5 region; the sequence is SAL.

This sequence belongs to the TRAFAC class translation factor GTPase superfamily. Classic translation factor GTPase family. EF-Tu/EF-1A subfamily. In terms of assembly, monomer.

The protein resides in the cytoplasm. The catalysed reaction is GTP + H2O = GDP + phosphate + H(+). Functionally, GTP hydrolase that promotes the GTP-dependent binding of aminoacyl-tRNA to the A-site of ribosomes during protein biosynthesis. This is Elongation factor Tu 2 from Orientia tsutsugamushi (strain Boryong) (Rickettsia tsutsugamushi).